The chain runs to 541 residues: Peptidyl-alpha-hydroxyglycine alpha-amidating lyase 1 (541 aa).

Residues 1–33 form the signal peptide; it reads MKSTDSAKCLGSKSLAICCLLLHLLLCIRPAVS. The Extracellular portion of the chain corresponds to 34 to 458; that stretch reads QTQSPQRYLH…VAVHHPSGKA (425 aa). An N-linked (GlcNAc...) asparagine glycan is attached at Asn92. NHL repeat units lie at residues 164 to 205, 215 to 258, and 272 to 314; these read GKVQ…FPPR, LGDA…YSRK, and GISY…FLSS. 2 cysteine pairs are disulfide-bonded: Cys228–Cys248 and Cys299–Cys310. The N-linked (GlcNAc...) asparagine glycan is linked to Asn315. An NHL 4 repeat occupies 374–418; sequence KQLVSKFGPNNLQFQNPHDVAVTADGNEIYVAELNPMRIHKFVHR. A helical membrane pass occupies residues 459 to 479; sequence ILVASLMLLFAGSTFALALIF. Topologically, residues 480–541 are cytoplasmic; sequence ARRRKRGCLP…TKTLASAQYA (62 aa). The tract at residues 521 to 541 is disordered; that stretch reads LDQQASDEEQETKTLASAQYA.

This sequence belongs to the peptidyl-alpha-hydroxyglycine alpha-amidating lyase family. The cofactor is Zn(2+). N-glycosylated. Widely expressed. In mature larvae, it is ubiquitously expressed with a low expression in all cells and a stronger expression in a subset of neurons. Colocalizes with neuropeptide proctolin. In adults, weak expression is observed in most neuronal cell bodies and in scattered large cells throughout the protocerebrum and also in the subesophageal neuromeres (at protein level).

It localises to the cell membrane. It catalyses the reaction a [peptide]-C-terminal (2S)-2-hydroxyglycine = a [peptide]-C-terminal amide + glyoxylate. Peptidyl-alpha-hydroxylglycine alpha-amidating lyase that catalyzes an essential reaction in C-terminal alpha-amidation of peptides. Mediates the dismutation of the unstable peptidyl(2-hydroxyglycine) intermediate to glyoxylate and the corresponding desglycine peptide amide. C-terminal amidation of peptides such as neuropeptides is essential for full biological activity. This is Peptidyl-alpha-hydroxyglycine alpha-amidating lyase 1 (Pal1) from Drosophila melanogaster (Fruit fly).